The following is a 409-amino-acid chain: Multifunctional CCA protein (409 aa).

Residues glycine 8 and arginine 11 each coordinate ATP. The CTP site is built by glycine 8 and arginine 11. Glutamate 21 and aspartate 23 together coordinate Mg(2+). 3 residues coordinate ATP: arginine 91, arginine 137, and arginine 140. 3 residues coordinate CTP: arginine 91, arginine 137, and arginine 140. Residues 228–329 form the HD domain; it reads TGVHTLMVLT…LKALEGLDAF (102 aa).

Belongs to the tRNA nucleotidyltransferase/poly(A) polymerase family. Bacterial CCA-adding enzyme type 1 subfamily. As to quaternary structure, monomer. Can also form homodimers and oligomers. The cofactor is Mg(2+). Ni(2+) serves as cofactor.

It carries out the reaction a tRNA precursor + 2 CTP + ATP = a tRNA with a 3' CCA end + 3 diphosphate. It catalyses the reaction a tRNA with a 3' CCA end + 2 CTP + ATP = a tRNA with a 3' CCACCA end + 3 diphosphate. Functionally, catalyzes the addition and repair of the essential 3'-terminal CCA sequence in tRNAs without using a nucleic acid template. Adds these three nucleotides in the order of C, C, and A to the tRNA nucleotide-73, using CTP and ATP as substrates and producing inorganic pyrophosphate. tRNA 3'-terminal CCA addition is required both for tRNA processing and repair. Also involved in tRNA surveillance by mediating tandem CCA addition to generate a CCACCA at the 3' terminus of unstable tRNAs. While stable tRNAs receive only 3'-terminal CCA, unstable tRNAs are marked with CCACCA and rapidly degraded. This chain is Multifunctional CCA protein, found in Thioalkalivibrio sulfidiphilus (strain HL-EbGR7).